A 386-amino-acid polypeptide reads, in one-letter code: S-adenosylmethionine synthase (386 aa).

H16 contacts ATP. D18 contacts Mg(2+). Residue E44 coordinates K(+). Positions 57 and 100 each coordinate L-methionine. The flexible loop stretch occupies residues 100-110; sequence QSRDIAQGVDR. ATP is bound by residues 165 to 167, D240, 246 to 247, A263, and K267; these read DAK and RK. L-methionine is bound at residue D240. K271 contacts L-methionine.

This sequence belongs to the AdoMet synthase family. In terms of assembly, homotetramer; dimer of dimers. It depends on Mg(2+) as a cofactor. K(+) is required as a cofactor.

It is found in the cytoplasm. The enzyme catalyses L-methionine + ATP + H2O = S-adenosyl-L-methionine + phosphate + diphosphate. The protein operates within amino-acid biosynthesis; S-adenosyl-L-methionine biosynthesis; S-adenosyl-L-methionine from L-methionine: step 1/1. Its function is as follows. Catalyzes the formation of S-adenosylmethionine (AdoMet) from methionine and ATP. The overall synthetic reaction is composed of two sequential steps, AdoMet formation and the subsequent tripolyphosphate hydrolysis which occurs prior to release of AdoMet from the enzyme. The chain is S-adenosylmethionine synthase from Francisella tularensis subsp. holarctica (strain FTNF002-00 / FTA).